Reading from the N-terminus, the 22-residue chain is Brevinin-1OKc (22 aa).

Lys-22 carries the lysine amide modification.

Expressed by the skin glands.

The protein localises to the secreted. Antimicrobial peptide. Active against Gram-negative bacterium E.coli (MIC=6 uM) and against Gram-positive bacterium S.aureus (MIC=12.5 uM). The protein is Brevinin-1OKc of Nidirana okinavana (Kampira Falls frog).